Here is a 435-residue protein sequence, read N- to C-terminus: MKKKIVAIVGKPNVGKSSLFNRIIKEKKSIVDNKPGVTRDRIYSNAEWLTREFILIDTGGISVDQQLFSNEIQIQTQIAIEQADVIIFVVDFLNRLDKDDKIIAKILHKSKKPVILAINKYDKKTIDEHNYEFMNLGFSDLYFISSTHGIGIGDLLDKVISYISKNDVELKDDSTKIAIIGKPNVGKSSLVNSLVNENRMIVSEIEGTTLDAVDISFSYNKKKYIVIDTAGIRKKSKLGQTVEKYSYLRSLSAIANSDIVLLMIDATKPITDQDTNIGGLIYDEKKPVIIVVNKWDLIKNKQEQILKKEEEIRAYFKYLSYAKIIFISALDKTRVTKILDLIDEIKQSLSVKVKTYVLNEVLNKAQLINPAPEFNGNRLKIYYASQVQAYIPTFVLFCNNPNYLHFSYKRFLENQIRFSFGFDSIPINLIFRERK.

EngA-type G domains lie at 4–167 (KIVA…SKND) and 175–350 (TKIA…QSLS). Residues 10 to 17 (GKPNVGKS), 57 to 61 (DTGGI), 119 to 122 (NKYD), 181 to 188 (GKPNVGKS), 228 to 232 (DTAGI), and 293 to 296 (NKWD) contribute to the GTP site. The region spanning 351–435 (VKVKTYVLNE…PINLIFRERK (85 aa)) is the KH-like domain.

Belongs to the TRAFAC class TrmE-Era-EngA-EngB-Septin-like GTPase superfamily. EngA (Der) GTPase family. In terms of assembly, associates with the 50S ribosomal subunit.

In terms of biological role, GTPase that plays an essential role in the late steps of ribosome biogenesis. The sequence is that of GTPase Der from Mycoplasma capricolum subsp. capricolum (strain California kid / ATCC 27343 / NCTC 10154).